The primary structure comprises 347 residues: MIKEYYGAETFILNKDFAYILVIGTTDVSLIPGLTIAGATPELTHFTPAADAEYVLLGKCKSINTIPVSPTGIPTPALLTRASLSFINPLKIVVNAGSRILPKIPYIDLQGEPGKDIRKQALSMEKVNNIIENSIKLGEELSNEYELIMIGESIPAGTTTAMATLLALGYDAMDKVSSASPDNPKELKRKVVEEALRNLPTDSLQRLAKVSDPVLLGVAGTSLGFKGKILLAGGTQMTAAAAIINEFDKNKLKDITIGTTKWIVEDKFADMLSLAKQVGVKVLASMLDLSISAYEGIRAYEKGYVKEGVGAGGSAIMALVRGVSNNTLVRKIDELYGELVGSNNLHI.

The protein belongs to the UPF0284 family.

The chain is UPF0284 protein LS215_0030 from Saccharolobus islandicus (strain L.S.2.15 / Lassen #1) (Sulfolobus islandicus).